The sequence spans 382 residues: Opsin Rh3 (382 aa).

Over 1–56 (MEYHNVSSVLGNVSSVLRPDARLSAESRLLGWNVPPDELRHIPEHWLIYPEPPESM) the chain is Extracellular. N-linked (GlcNAc...) asparagine glycosylation occurs at Asn12. The chain crosses the membrane as a helical span at residues 57-81 (NYLLGTLYIFFTVISMIGNGLVMWV). The Cytoplasmic segment spans residues 82–93 (FSAAKSLRTPSN). Residues 94 to 118 (ILVINLAFCDFMMMIKTPIFIYNSF) traverse the membrane as a helical segment. At 119-132 (HQGYALGHLGCQIF) the chain is on the extracellular side. Cys129 and Cys206 are oxidised to a cystine. Residues 133–152 (GVIGSYTGIAAGATNAFIAY) form a helical membrane-spanning segment. Over 153 to 170 (DRYNVITRPMEGKMTHGK) the chain is Cytoplasmic. Residues 171–195 (AIAMIIFIYLYATPWVVACYTESWG) form a helical membrane-spanning segment. At 196–219 (RFVPEGYLTSCTFDYLTDNFDTRL) the chain is on the extracellular side. A helical membrane pass occupies residues 220-247 (FVACIFFFSFVCPTTMITYYYSQIVGHV). Residues 248 to 283 (FSHEKALRDQAKKMNVDSLRSNVDKSKEAAEIRIAK) lie on the Cytoplasmic side of the membrane. The helical transmembrane segment at 284-307 (AAITICFLFFASWTPYGVMSLIGA) threads the bilayer. Over 308–315 (FGDKTLLT) the chain is Extracellular. The helical transmembrane segment at 316-340 (PGATMIPACTCKMVACIDPFVYAIS) threads the bilayer. The residue at position 327 (Lys327) is an N6-(retinylidene)lysine. Topologically, residues 341-382 (HPRYRMELQKRCPWLAISEKAPESAAAISTSTTQEQQQTTAA) are cytoplasmic.

Belongs to the G-protein coupled receptor 1 family. Opsin subfamily. Post-translationally, phosphorylated on some or all of the serine and threonine residues present in the C-terminal region.

The protein localises to the membrane. Visual pigments are the light-absorbing molecules that mediate vision. They consist of an apoprotein, opsin, covalently linked to cis-retinal. The chain is Opsin Rh3 (Rh3) from Drosophila pseudoobscura pseudoobscura (Fruit fly).